The sequence spans 668 residues: DNA ligase (668 aa).

NAD(+) contacts are provided by residues 37 to 41 (DAVYD), 86 to 87 (SM), and glutamate 116. The active-site N6-AMP-lysine intermediate is lysine 118. NAD(+) is bound by residues arginine 139, glutamate 173, lysine 288, and lysine 312. 4 residues coordinate Zn(2+): cysteine 406, cysteine 409, cysteine 424, and cysteine 429. In terms of domain architecture, BRCT spans 590–668 (APDNFFKEKT…EQEAIAKIEK (79 aa)).

This sequence belongs to the NAD-dependent DNA ligase family. LigA subfamily. Mg(2+) serves as cofactor. Mn(2+) is required as a cofactor.

It carries out the reaction NAD(+) + (deoxyribonucleotide)n-3'-hydroxyl + 5'-phospho-(deoxyribonucleotide)m = (deoxyribonucleotide)n+m + AMP + beta-nicotinamide D-nucleotide.. In terms of biological role, DNA ligase that catalyzes the formation of phosphodiester linkages between 5'-phosphoryl and 3'-hydroxyl groups in double-stranded DNA using NAD as a coenzyme and as the energy source for the reaction. It is essential for DNA replication and repair of damaged DNA. The sequence is that of DNA ligase from Lactobacillus johnsonii (strain CNCM I-12250 / La1 / NCC 533).